Here is a 94-residue protein sequence, read N- to C-terminus: MRWLTVGLLAAIGLLQYPLWVGKGGWLKVWEYDRQLQQQKEVTRKLEIRNAGLDAEVRDLKQGYDAIEERARFELGMVKQDETFVQIPEKVPGK.

At 1–3 (MRW) the chain is on the cytoplasmic side. A helical membrane pass occupies residues 4 to 21 (LTVGLLAAIGLLQYPLWV). Residues 22–94 (GKGGWLKVWE…VQIPEKVPGK (73 aa)) are Periplasmic-facing. Residues 31–73 (EYDRQLQQQKEVTRKLEIRNAGLDAEVRDLKQGYDAIEERARF) adopt a coiled-coil conformation.

The protein belongs to the FtsB family. Part of a complex composed of FtsB, FtsL and FtsQ.

The protein resides in the cell inner membrane. Essential cell division protein. May link together the upstream cell division proteins, which are predominantly cytoplasmic, with the downstream cell division proteins, which are predominantly periplasmic. This chain is Cell division protein FtsB, found in Dechloromonas aromatica (strain RCB).